Reading from the N-terminus, the 148-residue chain is Hemoglobin subunit beta-B (148 aa).

The region spanning 3–148 (DWTDAERAAI…VVSALGRQYH (146 aa)) is the Globin domain. Heme b contacts are provided by histidine 64 and histidine 93.

Belongs to the globin family. In terms of assembly, heterotetramer of two alpha chains and two beta chains. As to expression, red blood cells.

Involved in oxygen transport from gills to the various peripheral tissues. The protein is Hemoglobin subunit beta-B (hbb2) of Seriola quinqueradiata (Five-ray yellowtail).